Here is a 146-residue protein sequence, read N- to C-terminus: Hemoglobin subunit beta (146 aa).

Val1 carries the N-acetylvaline modification. The 145-residue stretch at 2-146 folds into the Globin domain; the sequence is HLTADEKTAV…VANALAHKYH (145 aa). A Phosphothreonine modification is found at Thr12. Ser44 bears the Phosphoserine mark. Lys59 carries the N6-acetyllysine modification. His63 lines the heme b pocket. At Lys82 the chain carries N6-acetyllysine. Residue His92 coordinates heme b. Residue Cys93 is modified to S-nitrosocysteine. Residue Lys144 is modified to N6-acetyllysine.

It belongs to the globin family. In terms of assembly, heterotetramer of two alpha chains and two beta chains. Red blood cells.

Its function is as follows. Involved in oxygen transport from the lung to the various peripheral tissues. In Procyon lotor (Raccoon), this protein is Hemoglobin subunit beta (HBB).